Here is a 196-residue protein sequence, read N- to C-terminus: MNEIISTTILLILIMDPLGNLPIFMTILKKLDAKRRRIVVIREMIIALIVMLIFLFVGEKILTILNLKTETVSISGGIILFLIAIKMIFPSDEGNNGTSSEEEPFLVPLAIPLVAGPSLLATLMLLSHQYLHHMPYLVGSLLIAWFFTIIILLLSGLFLKLFGDKGVNALERLMGLILIMLSTQMFLDGIKAWFKN.

6 consecutive transmembrane segments (helical) span residues 8 to 28 (TILL…MTIL), 45 to 65 (IIAL…LTIL), 71 to 91 (TVSI…IFPS), 105 to 125 (FLVP…TLML), 134 to 154 (MPYL…ILLL), and 174 to 194 (MGLI…KAWF).

It belongs to the UPF0056 (MarC) family.

It localises to the cell membrane. The chain is UPF0056 membrane protein BUsg_434 from Buchnera aphidicola subsp. Schizaphis graminum (strain Sg).